The chain runs to 249 residues: Probable transcriptional regulatory protein CYB_1350 (249 aa).

This sequence belongs to the TACO1 family.

Its subcellular location is the cytoplasm. The chain is Probable transcriptional regulatory protein CYB_1350 from Synechococcus sp. (strain JA-2-3B'a(2-13)) (Cyanobacteria bacterium Yellowstone B-Prime).